The sequence spans 352 residues: Histidine biosynthesis bifunctional protein HisB (352 aa).

The interval 1–164 is histidinol-phosphatase; sequence MSQKILFIDR…EIENEILSSF (164 aa). Residue Asp9 is the Nucleophile of the active site. 2 residues coordinate Mg(2+): Asp9 and Asp11. The Proton donor role is filled by Asp11. Residues Cys93, His95, Cys101, and Cys103 each coordinate Zn(2+). Asp130 contributes to the Mg(2+) binding site. Residues 165-352 form an imidazoleglycerol-phosphate dehydratase region; it reads RSASYQRTTK…ENLASSKGVI (188 aa).

This sequence in the N-terminal section; belongs to the histidinol-phosphatase family. In the C-terminal section; belongs to the imidazoleglycerol-phosphate dehydratase family. It depends on Mg(2+) as a cofactor. Requires Zn(2+) as cofactor.

Its subcellular location is the cytoplasm. It catalyses the reaction D-erythro-1-(imidazol-4-yl)glycerol 3-phosphate = 3-(imidazol-4-yl)-2-oxopropyl phosphate + H2O. It carries out the reaction L-histidinol phosphate + H2O = L-histidinol + phosphate. It functions in the pathway amino-acid biosynthesis; L-histidine biosynthesis; L-histidine from 5-phospho-alpha-D-ribose 1-diphosphate: step 6/9. It participates in amino-acid biosynthesis; L-histidine biosynthesis; L-histidine from 5-phospho-alpha-D-ribose 1-diphosphate: step 8/9. In Campylobacter jejuni subsp. jejuni serotype O:23/36 (strain 81-176), this protein is Histidine biosynthesis bifunctional protein HisB.